We begin with the raw amino-acid sequence, 378 residues long: Mannitol-1-phosphate 5-dehydrogenase (378 aa).

4-15 (SVHFGAGNIGRG) lines the NAD(+) pocket.

This sequence belongs to the mannitol dehydrogenase family.

The enzyme catalyses D-mannitol 1-phosphate + NAD(+) = beta-D-fructose 6-phosphate + NADH + H(+). The chain is Mannitol-1-phosphate 5-dehydrogenase from Streptococcus pneumoniae (strain ATCC BAA-255 / R6).